Consider the following 220-residue polypeptide: Uracil-DNA glycosylase (220 aa).

Asp65 functions as the Proton acceptor in the catalytic mechanism.

Belongs to the uracil-DNA glycosylase (UDG) superfamily. UNG family.

It localises to the cytoplasm. The catalysed reaction is Hydrolyzes single-stranded DNA or mismatched double-stranded DNA and polynucleotides, releasing free uracil.. Its function is as follows. Excises uracil residues from the DNA which can arise as a result of misincorporation of dUMP residues by DNA polymerase or due to deamination of cytosine. The protein is Uracil-DNA glycosylase of Leuconostoc mesenteroides subsp. mesenteroides (strain ATCC 8293 / DSM 20343 / BCRC 11652 / CCM 1803 / JCM 6124 / NCDO 523 / NBRC 100496 / NCIMB 8023 / NCTC 12954 / NRRL B-1118 / 37Y).